Consider the following 188-residue polypeptide: FMN-dependent NADPH-azoreductase (188 aa).

Belongs to the azoreductase type 2 family. As to quaternary structure, homotetramer. The cofactor is FMN.

Its function is as follows. Catalyzes the reductive cleavage of azo bond in aromatic azo compounds to the corresponding amines. Requires NADPH, but not NADH, as an electron donor for its activity. The protein is FMN-dependent NADPH-azoreductase (azo1) of Staphylococcus epidermidis (strain ATCC 12228 / FDA PCI 1200).